The sequence spans 87 residues: Small cysteine-rich outer membrane protein omcA (87 aa).

Positions 1–19 (MKKAVLLATVFCGVVGLTS) are cleaved as a signal peptide. Cys20 carries N-palmitoyl cysteine lipidation. Residue Cys20 is the site of S-diacylglycerol cysteine attachment.

As to quaternary structure, part of a disulfide cross-linked outer membrane complex (COMC) composed of the major outer membrane porin (MOMP), the small cysteine-rich protein (omcA) and the large cysteine-rich periplasmic protein (omcB). In terms of processing, N-terminal amide-linked and S-diacylglycerol cysteine-linked to 16:0, 18:0, 15:0 branched, and 17:0 branched fatty acids (ratio 6:5:3:4) in the EB stage. The exact distribution of fatty acids has not been determined. The N-terminus is blocked.

It localises to the cell outer membrane. Its function is as follows. In elementary bodies (EBs, the infectious stage, which is able to survive outside the host cell) provides the structural integrity of the outer envelope through disulfide cross-links with the large cysteine-rich periplasmic protein and the major outer membrane porin. It has been described in publications as the Sarkosyl-insoluble COMC (Chlamydia outer membrane complex), and serves as the functional equivalent of peptidoglycan. In Chlamydia psittaci (Chlamydophila psittaci), this protein is Small cysteine-rich outer membrane protein omcA (omcA).